A 291-amino-acid chain; its full sequence is Aliphatic sulfonates import ATP-binding protein SsuB 2 (291 aa).

Residues 26–247 (LRVRGIAKRY…APGLPALASI (222 aa)) form the ABC transporter domain. Residue 58–65 (GRSGCGKS) coordinates ATP. The tract at residues 264–291 (PAAPKAQTRHGPPRGATAQDTSPLQRIL) is disordered. A compositionally biased stretch (polar residues) spans 281–291 (AQDTSPLQRIL).

The protein belongs to the ABC transporter superfamily. Aliphatic sulfonates importer (TC 3.A.1.17.2) family. In terms of assembly, the complex is composed of two ATP-binding proteins (SsuB), two transmembrane proteins (SsuC) and a solute-binding protein (SsuA).

It is found in the cell inner membrane. It catalyses the reaction ATP + H2O + aliphatic sulfonate-[sulfonate-binding protein]Side 1 = ADP + phosphate + aliphatic sulfonateSide 2 + [sulfonate-binding protein]Side 1.. Its function is as follows. Part of the ABC transporter complex SsuABC involved in aliphatic sulfonates import. Responsible for energy coupling to the transport system. The chain is Aliphatic sulfonates import ATP-binding protein SsuB 2 from Xanthomonas axonopodis pv. citri (strain 306).